Here is a 245-residue protein sequence, read N- to C-terminus: DNA polymerase sliding clamp (245 aa).

This sequence belongs to the PCNA family. In terms of assembly, homotrimer. The subunits circularize to form a toroid; DNA passes through its center. Replication factor C (RFC) is required to load the toroid on the DNA.

Its function is as follows. Sliding clamp subunit that acts as a moving platform for DNA processing. Responsible for tethering the catalytic subunit of DNA polymerase and other proteins to DNA during high-speed replication. This Methanococcoides burtonii (strain DSM 6242 / NBRC 107633 / OCM 468 / ACE-M) protein is DNA polymerase sliding clamp.